The primary structure comprises 489 residues: Glutamate--tRNA ligase (489 aa).

The 'HIGH' region signature appears at P10–G20. The 'KMSKS' region motif lies at K261 to R265. K264 provides a ligand contact to ATP.

This sequence belongs to the class-I aminoacyl-tRNA synthetase family. Glutamate--tRNA ligase type 1 subfamily. Monomer.

It localises to the cytoplasm. It catalyses the reaction tRNA(Glu) + L-glutamate + ATP = L-glutamyl-tRNA(Glu) + AMP + diphosphate. Catalyzes the attachment of glutamate to tRNA(Glu) in a two-step reaction: glutamate is first activated by ATP to form Glu-AMP and then transferred to the acceptor end of tRNA(Glu). The chain is Glutamate--tRNA ligase from Finegoldia magna (strain ATCC 29328 / DSM 20472 / WAL 2508) (Peptostreptococcus magnus).